A 217-amino-acid chain; its full sequence is MRSRKSSRAEAPGLPTDRQLGLSWDVPGLLAGVDEAGRGPLAGPVVAAAVILDDVQPIRGLGDSKVLSERVRERLFDEIRAKALCCCIAEASVEEIDTLNILQATLLAMRRAVAGLRLRPNKVLVDGNRLPVLQVPAEAIVKGDAKVAAISAASILAKVHRDRLCLALHEAHPQYGFAGHKGYPTPDHLAALRVHGACGAHRRSFAPVREVLLERRP.

In terms of domain architecture, RNase H type-2 spans 28-217 (GLLAGVDEAG…VREVLLERRP (190 aa)). Asp-34, Glu-35, and Asp-126 together coordinate a divalent metal cation.

Belongs to the RNase HII family. The cofactor is Mn(2+). Requires Mg(2+) as cofactor.

It localises to the cytoplasm. It catalyses the reaction Endonucleolytic cleavage to 5'-phosphomonoester.. Functionally, endonuclease that specifically degrades the RNA of RNA-DNA hybrids. In Methylibium petroleiphilum (strain ATCC BAA-1232 / LMG 22953 / PM1), this protein is Ribonuclease HII 2.